The chain runs to 233 residues: Large ribosomal subunit protein uL1 (233 aa).

Belongs to the universal ribosomal protein uL1 family. As to quaternary structure, part of the 50S ribosomal subunit.

Binds directly to 23S rRNA. The L1 stalk is quite mobile in the ribosome, and is involved in E site tRNA release. In terms of biological role, protein L1 is also a translational repressor protein, it controls the translation of the L11 operon by binding to its mRNA. The chain is Large ribosomal subunit protein uL1 from Brucella suis (strain ATCC 23445 / NCTC 10510).